The following is a 397-amino-acid chain: Arginine biosynthesis bifunctional protein ArgJ (397 aa).

T147, K173, T184, E270, N392, and T397 together coordinate substrate. The active-site Nucleophile is T184.

This sequence belongs to the ArgJ family. In terms of assembly, heterotetramer of two alpha and two beta chains.

It localises to the cytoplasm. The enzyme catalyses N(2)-acetyl-L-ornithine + L-glutamate = N-acetyl-L-glutamate + L-ornithine. It catalyses the reaction L-glutamate + acetyl-CoA = N-acetyl-L-glutamate + CoA + H(+). It functions in the pathway amino-acid biosynthesis; L-arginine biosynthesis; L-ornithine and N-acetyl-L-glutamate from L-glutamate and N(2)-acetyl-L-ornithine (cyclic): step 1/1. It participates in amino-acid biosynthesis; L-arginine biosynthesis; N(2)-acetyl-L-ornithine from L-glutamate: step 1/4. Catalyzes two activities which are involved in the cyclic version of arginine biosynthesis: the synthesis of N-acetylglutamate from glutamate and acetyl-CoA as the acetyl donor, and of ornithine by transacetylation between N(2)-acetylornithine and glutamate. In Streptococcus mutans serotype c (strain ATCC 700610 / UA159), this protein is Arginine biosynthesis bifunctional protein ArgJ.